The following is a 145-amino-acid chain: Large ribosomal subunit protein uL16 (145 aa).

The protein belongs to the universal ribosomal protein uL16 family. Part of the 50S ribosomal subunit.

Functionally, binds 23S rRNA and is also seen to make contacts with the A and possibly P site tRNAs. The protein is Large ribosomal subunit protein uL16 of Exiguobacterium sibiricum (strain DSM 17290 / CCUG 55495 / CIP 109462 / JCM 13490 / 255-15).